Reading from the N-terminus, the 123-residue chain is Ribosome-binding factor A (123 aa).

Belongs to the RbfA family. In terms of assembly, monomer. Binds 30S ribosomal subunits, but not 50S ribosomal subunits or 70S ribosomes.

It is found in the cytoplasm. In terms of biological role, one of several proteins that assist in the late maturation steps of the functional core of the 30S ribosomal subunit. Associates with free 30S ribosomal subunits (but not with 30S subunits that are part of 70S ribosomes or polysomes). Required for efficient processing of 16S rRNA. May interact with the 5'-terminal helix region of 16S rRNA. The protein is Ribosome-binding factor A of Desulfatibacillum aliphaticivorans.